A 500-amino-acid polypeptide reads, in one-letter code: Cobyric acid synthase (500 aa).

The region spanning 251-449 (KLNIVIPIMP…LHGVFDHPDA (199 aa)) is the GATase cobBQ-type domain. C332 acts as the Nucleophile in catalysis. The active site involves H441.

It belongs to the CobB/CobQ family. CobQ subfamily.

It participates in cofactor biosynthesis; adenosylcobalamin biosynthesis. Catalyzes amidations at positions B, D, E, and G on adenosylcobyrinic A,C-diamide. NH(2) groups are provided by glutamine, and one molecule of ATP is hydrogenolyzed for each amidation. The protein is Cobyric acid synthase of Marinomonas sp. (strain MWYL1).